Here is a 398-residue protein sequence, read N- to C-terminus: Protein trichome birefringence-like 45 (398 aa).

A helical; Signal-anchor for type II membrane protein transmembrane segment spans residues 1-21 (MAAVQCLTFLFLFLLQNATSA). Positions 131–133 (GDS) match the GDS motif motif. The short motif at 375–389 (DCSHWCLPGLPDTWN) is the DCXHWCLPGXXDXWN motif element.

This sequence belongs to the PC-esterase family. TBL subfamily.

The protein resides in the membrane. Functionally, may act as a bridging protein that binds pectin and other cell wall polysaccharides. Probably involved in maintaining esterification of pectins. May be involved in the specific O-acetylation of cell wall polymers. The chain is Protein trichome birefringence-like 45 (TBL45) from Arabidopsis thaliana (Mouse-ear cress).